A 322-amino-acid chain; its full sequence is Transaldolase (322 aa).

The active-site Schiff-base intermediate with substrate is the lysine 136.

Belongs to the transaldolase family. Type 1 subfamily. As to quaternary structure, homodimer.

The protein localises to the cytoplasm. The catalysed reaction is D-sedoheptulose 7-phosphate + D-glyceraldehyde 3-phosphate = D-erythrose 4-phosphate + beta-D-fructose 6-phosphate. It participates in carbohydrate degradation; pentose phosphate pathway; D-glyceraldehyde 3-phosphate and beta-D-fructose 6-phosphate from D-ribose 5-phosphate and D-xylulose 5-phosphate (non-oxidative stage): step 2/3. Transaldolase is important for the balance of metabolites in the pentose-phosphate pathway. This chain is Transaldolase, found in Xanthomonas oryzae pv. oryzae (strain PXO99A).